A 510-amino-acid polypeptide reads, in one-letter code: D-alanine--D-alanyl carrier protein ligase (510 aa).

157-158 (TS) is an ATP binding site. A D-alanine-binding site is contributed by Asp202. 297–302 (NTYGPT) serves as a coordination point for ATP. Val306 is a binding site for D-alanine. ATP-binding residues include Asp389 and Lys498. Lys498 contributes to the D-alanine binding site.

This sequence belongs to the ATP-dependent AMP-binding enzyme family. DltA subfamily.

It is found in the cytoplasm. It catalyses the reaction holo-[D-alanyl-carrier protein] + D-alanine + ATP = D-alanyl-[D-alanyl-carrier protein] + AMP + diphosphate. It functions in the pathway cell wall biogenesis; lipoteichoic acid biosynthesis. Functionally, catalyzes the first step in the D-alanylation of lipoteichoic acid (LTA), the activation of D-alanine and its transfer onto the D-alanyl carrier protein (Dcp) DltC. In an ATP-dependent two-step reaction, forms a high energy D-alanyl-AMP intermediate, followed by transfer of the D-alanyl residue as a thiol ester to the phosphopantheinyl prosthetic group of the Dcp. D-alanylation of LTA plays an important role in modulating the properties of the cell wall in Gram-positive bacteria, influencing the net charge of the cell wall. This Listeria monocytogenes serotype 4b (strain CLIP80459) protein is D-alanine--D-alanyl carrier protein ligase.